Reading from the N-terminus, the 503-residue chain is Aspartyl/glutamyl-tRNA(Asn/Gln) amidotransferase subunit B (503 aa).

It belongs to the GatB/GatE family. GatB subfamily. Heterotrimer of A, B and C subunits.

It carries out the reaction L-glutamyl-tRNA(Gln) + L-glutamine + ATP + H2O = L-glutaminyl-tRNA(Gln) + L-glutamate + ADP + phosphate + H(+). It catalyses the reaction L-aspartyl-tRNA(Asn) + L-glutamine + ATP + H2O = L-asparaginyl-tRNA(Asn) + L-glutamate + ADP + phosphate + 2 H(+). Functionally, allows the formation of correctly charged Asn-tRNA(Asn) or Gln-tRNA(Gln) through the transamidation of misacylated Asp-tRNA(Asn) or Glu-tRNA(Gln) in organisms which lack either or both of asparaginyl-tRNA or glutaminyl-tRNA synthetases. The reaction takes place in the presence of glutamine and ATP through an activated phospho-Asp-tRNA(Asn) or phospho-Glu-tRNA(Gln). In Jannaschia sp. (strain CCS1), this protein is Aspartyl/glutamyl-tRNA(Asn/Gln) amidotransferase subunit B.